Consider the following 175-residue polypeptide: Inorganic pyrophosphatase (175 aa).

Positions 30, 44, and 56 each coordinate substrate. The Mg(2+) site is built by Asp-66, Asp-71, and Asp-103. Tyr-142 contacts substrate.

This sequence belongs to the PPase family. As to quaternary structure, homohexamer. Requires Mg(2+) as cofactor.

The protein resides in the cytoplasm. The enzyme catalyses diphosphate + H2O = 2 phosphate + H(+). Catalyzes the hydrolysis of inorganic pyrophosphate (PPi) forming two phosphate ions. The chain is Inorganic pyrophosphatase from Buchnera aphidicola subsp. Baizongia pistaciae (strain Bp).